Here is a 494-residue protein sequence, read N- to C-terminus: UPF0371 protein M6_Spy1067 (494 aa).

It belongs to the UPF0371 family.

The sequence is that of UPF0371 protein M6_Spy1067 from Streptococcus pyogenes serotype M6 (strain ATCC BAA-946 / MGAS10394).